The primary structure comprises 457 residues: Bifunctional protein GlmU (457 aa).

Residues 1 to 232 form a pyrophosphorylase region; sequence MNNLAAVILA…PAEVMGINDR (232 aa). UDP-N-acetyl-alpha-D-glucosamine is bound by residues 9–12, lysine 23, glutamine 75, and 80–81; these read LAAG and GT. Aspartate 105 is a binding site for Mg(2+). UDP-N-acetyl-alpha-D-glucosamine is bound by residues glycine 142, glutamate 157, asparagine 172, and asparagine 230. Asparagine 230 contacts Mg(2+). The tract at residues 233 to 253 is linker; it reads AQLAEAGQLLRGRINKALMLD. An N-acetyltransferase region spans residues 254–457; it reads GTTLIDPQTT…NKEGWKLKKK (204 aa). 2 residues coordinate UDP-N-acetyl-alpha-D-glucosamine: arginine 336 and lysine 354. Residue histidine 366 is the Proton acceptor of the active site. Residues tyrosine 369 and asparagine 380 each contribute to the UDP-N-acetyl-alpha-D-glucosamine site. Acetyl-CoA contacts are provided by residues 389–390, serine 408, alanine 426, and arginine 443; that span reads NY.

It in the N-terminal section; belongs to the N-acetylglucosamine-1-phosphate uridyltransferase family. The protein in the C-terminal section; belongs to the transferase hexapeptide repeat family. In terms of assembly, homotrimer. Mg(2+) serves as cofactor.

It is found in the cytoplasm. The enzyme catalyses alpha-D-glucosamine 1-phosphate + acetyl-CoA = N-acetyl-alpha-D-glucosamine 1-phosphate + CoA + H(+). It carries out the reaction N-acetyl-alpha-D-glucosamine 1-phosphate + UTP + H(+) = UDP-N-acetyl-alpha-D-glucosamine + diphosphate. It functions in the pathway nucleotide-sugar biosynthesis; UDP-N-acetyl-alpha-D-glucosamine biosynthesis; N-acetyl-alpha-D-glucosamine 1-phosphate from alpha-D-glucosamine 6-phosphate (route II): step 2/2. Its pathway is nucleotide-sugar biosynthesis; UDP-N-acetyl-alpha-D-glucosamine biosynthesis; UDP-N-acetyl-alpha-D-glucosamine from N-acetyl-alpha-D-glucosamine 1-phosphate: step 1/1. It participates in bacterial outer membrane biogenesis; LPS lipid A biosynthesis. Its function is as follows. Catalyzes the last two sequential reactions in the de novo biosynthetic pathway for UDP-N-acetylglucosamine (UDP-GlcNAc). The C-terminal domain catalyzes the transfer of acetyl group from acetyl coenzyme A to glucosamine-1-phosphate (GlcN-1-P) to produce N-acetylglucosamine-1-phosphate (GlcNAc-1-P), which is converted into UDP-GlcNAc by the transfer of uridine 5-monophosphate (from uridine 5-triphosphate), a reaction catalyzed by the N-terminal domain. The chain is Bifunctional protein GlmU from Geotalea uraniireducens (strain Rf4) (Geobacter uraniireducens).